Reading from the N-terminus, the 847-residue chain is Ras GTPase-activating protein 2 (847 aa).

Residues 1–21 (MAAAAPAAAASPEAPAVSGSA) show a composition bias toward low complexity. A disordered region spans residues 1–31 (MAAAAPAAAASPEAPAVSGSADPETGDEDSR). Alanine 2 is modified (N-acetylalanine). 2 C2 domains span residues 19-137 (GSAD…ETWF) and 148-288 (VQGK…QAWY). Residues 371–588 (NKLVPFITAV…TDVKKFLDEI (218 aa)) form the Ras-GAP domain. Serine 554 carries the post-translational modification Phosphoserine. The 102-residue stretch at 603–704 (VHLKEGEMYK…WIDVLCRVSR (102 aa)) folds into the PH domain. The Btk-type zinc-finger motif lies at 706–742 (NHNRLSSFHPSAYLNGNWLCCQETSESTPGCKPCTAG). Zn(2+) contacts are provided by histidine 714, cysteine 725, cysteine 726, and cysteine 736. The segment at 819-847 (DEPHEKYRKKRSSSAKYGSKENPIVGKIS) is disordered.

The protein localises to the cell membrane. In terms of biological role, inhibitory regulator of the Ras-cyclic AMP pathway. Binds inositol tetrakisphosphate (IP4) and phospholipids. The polypeptide is Ras GTPase-activating protein 2 (Rasa2) (Mus musculus (Mouse)).